The chain runs to 269 residues: Eukaryotic translation initiation factor 3 subunit G (269 aa).

The segment at 140–181 is disordered; sequence AIGGGDMSAQGGSGSGRYVPPSLRAGARDPSSNAYQDQRERD. Over residues 141-154 the composition is skewed to gly residues; the sequence is IGGGDMSAQGGSGS. Residue Ser161 is modified to Phosphoserine. In terms of domain architecture, RRM spans 184-263; that stretch reads KTIRLTQVNE…FMLHAEWSKP (80 aa).

The protein belongs to the eIF-3 subunit G family. In terms of assembly, component of the eukaryotic translation initiation factor 3 (eIF-3) complex.

Its subcellular location is the cytoplasm. In terms of biological role, RNA-binding component of the eukaryotic translation initiation factor 3 (eIF-3) complex, which is involved in protein synthesis of a specialized repertoire of mRNAs and, together with other initiation factors, stimulates binding of mRNA and methionyl-tRNAi to the 40S ribosome. The eIF-3 complex specifically targets and initiates translation of a subset of mRNAs involved in cell proliferation. This subunit can bind 18S rRNA. This chain is Eukaryotic translation initiation factor 3 subunit G, found in Kluyveromyces lactis (strain ATCC 8585 / CBS 2359 / DSM 70799 / NBRC 1267 / NRRL Y-1140 / WM37) (Yeast).